A 562-amino-acid polypeptide reads, in one-letter code: NAD-dependent malic enzyme (562 aa).

The active-site Proton donor is tyrosine 101. Arginine 154 contributes to the NAD(+) binding site. Lysine 172 (proton acceptor) is an active-site residue. Glutamate 243, aspartate 244, and aspartate 267 together coordinate a divalent metal cation. Positions 267 and 415 each coordinate NAD(+).

This sequence belongs to the malic enzymes family. As to quaternary structure, homotetramer. The cofactor is Mg(2+). Requires Mn(2+) as cofactor.

It carries out the reaction (S)-malate + NAD(+) = pyruvate + CO2 + NADH. The enzyme catalyses oxaloacetate + H(+) = pyruvate + CO2. In Shewanella oneidensis (strain ATCC 700550 / JCM 31522 / CIP 106686 / LMG 19005 / NCIMB 14063 / MR-1), this protein is NAD-dependent malic enzyme.